A 540-amino-acid chain; its full sequence is Chaperonin GroEL (540 aa).

ATP is bound by residues 30–33 (TLGP), 87–91 (DGTTT), glycine 414, 479–481 (NAL), and aspartate 495.

It belongs to the chaperonin (HSP60) family. In terms of assembly, forms a cylinder of 14 subunits composed of two heptameric rings stacked back-to-back. Interacts with the co-chaperonin GroES.

The protein resides in the cytoplasm. It carries out the reaction ATP + H2O + a folded polypeptide = ADP + phosphate + an unfolded polypeptide.. Its function is as follows. Together with its co-chaperonin GroES, plays an essential role in assisting protein folding. The GroEL-GroES system forms a nano-cage that allows encapsulation of the non-native substrate proteins and provides a physical environment optimized to promote and accelerate protein folding. This Carboxydothermus hydrogenoformans (strain ATCC BAA-161 / DSM 6008 / Z-2901) protein is Chaperonin GroEL.